The sequence spans 264 residues: Apolipoprotein A-I (264 aa).

The first 18 residues, 1 to 18 (MKAVVLTVAVFFLTGSQA), serve as a signal peptide directing secretion. 2 consecutive repeat copies span residues 67–88 (LKLLDNWDSLSSTVSKLREQIG) and 89–110 (PVTQEFWDKLEKDTVSLRQEMN). The tract at residues 67 to 264 (LKLLDNWDSL…DEATKKLTTQ (198 aa)) is 10 X approximate tandem repeats. Met109 is modified (methionine sulfoxide). The 3; half-length repeat unit spans residues 111-121 (KDLEEVKLKVQ). A run of 3 repeats spans residues 122-143 (PYLDEFQKRWQEDVERYRQQVE), 144-165 (PLGTELREGARQKLQELHEKLS), and 166-187 (PLGQELRDRARAHVDALRTHLA). One copy of the 7; truncated repeat lies at 188–207 (PYSDELRQRLAARLEALKES). Repeat 8 spans residues 208–229 (SSLADYQAKATEHLSALGEKAK). The 9; half-length repeat unit spans residues 230 to 240 (PALEDLRQGLL). Repeat unit 10 spans residues 241–264 (PVLENLKMSFWSAVDEATKKLTTQ).

Belongs to the apolipoprotein A1/A4/E family. Homodimer. Interacts with APOA1BP and CLU. Component of a sperm activating protein complex (SPAP), consisting of APOA1, an immunoglobulin heavy chain, an immunoglobulin light chain and albumin. Interacts with NDRG1. Interacts with SCGB3A2. Interacts with NAXE and YJEFN3. Post-translationally, glycosylated. In terms of processing, palmitoylated. Phosphorylation sites are present in the extracellular medium.

The protein resides in the secreted. Participates in the reverse transport of cholesterol from tissues to the liver for excretion by promoting cholesterol efflux from tissues and by acting as a cofactor for the lecithin cholesterol acyltransferase (LCAT). As part of the SPAP complex, activates spermatozoa motility. The protein is Apolipoprotein A-I (ApoA1) of Marmota monax (Woodchuck).